The following is a 263-amino-acid chain: UPF0758 protein Pden_2304 (263 aa).

In terms of domain architecture, MPN spans 141–263; the sequence is VLTSWDALLD…ELSFRSEGLL (123 aa). His212, His214, and Asp225 together coordinate Zn(2+). The short motif at 212–225 is the JAMM motif element; that stretch reads HNHPSGDPTPSQAD.

Belongs to the UPF0758 family.

The chain is UPF0758 protein Pden_2304 from Paracoccus denitrificans (strain Pd 1222).